The sequence spans 172 residues: MPRPEKVQLVAELTDRFASSTAAVLTEYRGLSVAQLNELRRALNGDAEYTVVKNTLSKLAVRNAGLTELEPLLQGPSAVAFVRGDPVKAAKSLRDFARANNALVIKGGILEGKLLSAAEVAALADLESREVLLAKVAGAANAVLARAAGLFQAPLAQVARLAEALRAKQAES.

Belongs to the universal ribosomal protein uL10 family. Part of the ribosomal stalk of the 50S ribosomal subunit. The N-terminus interacts with L11 and the large rRNA to form the base of the stalk. The C-terminus forms an elongated spine to which L12 dimers bind in a sequential fashion forming a multimeric L10(L12)X complex.

In terms of biological role, forms part of the ribosomal stalk, playing a central role in the interaction of the ribosome with GTP-bound translation factors. This is Large ribosomal subunit protein uL10 from Acidothermus cellulolyticus (strain ATCC 43068 / DSM 8971 / 11B).